The sequence spans 371 residues: MIARNQRTRVAVVYGGRSSEHAISCVSAGSILRNLDPERFDVVAVGITPDGSWVLTDGRPETLAITDGRLPEVSAESGTALALPADPGRRGELVSLSPAPAGEVLAAVDVVFPVLHGPYGEDGTIQGLLELAGVPYVGAGVLASAAGMDKEFTKKLLVAEGLPVGDHVVLRPGRANVTLDERERLGLPVFVKPARGGSSIGVSRVSDWAELPAAIEAARRHDPKVIVEAGIAGRELECGVLEYPDGRVDASTIGEIRVAGVRGREDGFYDFATKYLDDGAELDVPAKVEDDVADEIRRLAIRAFRAIDCQGLARVDFFLTDDGPVVNEINTMPGFTTISMYPRMWAASGVDYPTLLAAMVDTAVARGTGLR.

The ATP-grasp domain occupies 154-361 (KKLLVAEGLP…YPTLLAAMVD (208 aa)). Residue 182 to 237 (RERLGLPVFVKPARGGSSIGVSRVSDWAELPAAIEAARRHDPKVIVEAGIAGRELE) coordinates ATP. Aspartate 316, glutamate 328, and asparagine 330 together coordinate Mg(2+).

The protein belongs to the D-alanine--D-alanine ligase family. The cofactor is Mg(2+). It depends on Mn(2+) as a cofactor.

The protein localises to the cytoplasm. The catalysed reaction is 2 D-alanine + ATP = D-alanyl-D-alanine + ADP + phosphate + H(+). It functions in the pathway cell wall biogenesis; peptidoglycan biosynthesis. Cell wall formation. The chain is D-alanine--D-alanine ligase from Mycobacterium sp. (strain JLS).